A 532-amino-acid chain; its full sequence is Glucose-6-phosphate isomerase (532 aa).

Glu-330 functions as the Proton donor in the catalytic mechanism. Catalysis depends on residues His-359 and Lys-460.

It belongs to the GPI family.

The protein localises to the cytoplasm. The catalysed reaction is alpha-D-glucose 6-phosphate = beta-D-fructose 6-phosphate. Its pathway is carbohydrate biosynthesis; gluconeogenesis. It functions in the pathway carbohydrate degradation; glycolysis; D-glyceraldehyde 3-phosphate and glycerone phosphate from D-glucose: step 2/4. Catalyzes the reversible isomerization of glucose-6-phosphate to fructose-6-phosphate. The polypeptide is Glucose-6-phosphate isomerase (Prochlorococcus marinus (strain MIT 9211)).